Here is a 349-residue protein sequence, read N- to C-terminus: NADH-ubiquinone oxidoreductase chain 2 (349 aa).

Transmembrane regions (helical) follow at residues 3–23 (PYVL…TFAS), 25–45 (HWLL…PIMA), 66–86 (AAAM…EWEI), 98–118 (VMLA…LPEV), 149–171 (INSS…GGLN), 178–197 (ILAY…LQYA), 202–219 (LLSL…FLTL), 240–260 (LAAL…LSGF), 274–294 (GLPL…YFYL), and 319–339 (FTLI…LLPL).

It belongs to the complex I subunit 2 family.

It is found in the mitochondrion inner membrane. The enzyme catalyses a ubiquinone + NADH + 5 H(+)(in) = a ubiquinol + NAD(+) + 4 H(+)(out). Core subunit of the mitochondrial membrane respiratory chain NADH dehydrogenase (Complex I) that is believed to belong to the minimal assembly required for catalysis. Complex I functions in the transfer of electrons from NADH to the respiratory chain. The immediate electron acceptor for the enzyme is believed to be ubiquinone. In Salmo salar (Atlantic salmon), this protein is NADH-ubiquinone oxidoreductase chain 2 (MT-ND2).